Reading from the N-terminus, the 191-residue chain is Photosystem I assembly protein Ycf4 (191 aa).

2 consecutive transmembrane segments (helical) span residues 34 to 54 and 68 to 88; these read VASMLSIGGVGFLLASFSSYF and IFVPQGLVMGLYGLAAFLLAI.

The protein belongs to the Ycf4 family.

The protein resides in the cellular thylakoid membrane. Its function is as follows. Seems to be required for the assembly of the photosystem I complex. The sequence is that of Photosystem I assembly protein Ycf4 from Prochlorococcus marinus (strain NATL1A).